Reading from the N-terminus, the 136-residue chain is NADPH-dependent 7-cyano-7-deazaguanine reductase (136 aa).

C50 (thioimide intermediate) is an active-site residue. The active-site Proton donor is D57. Substrate is bound by residues 72-74 (YEL) and 91-92 (HE).

The protein belongs to the GTP cyclohydrolase I family. QueF type 1 subfamily.

It localises to the cytoplasm. The catalysed reaction is 7-aminomethyl-7-carbaguanine + 2 NADP(+) = 7-cyano-7-deazaguanine + 2 NADPH + 3 H(+). The protein operates within tRNA modification; tRNA-queuosine biosynthesis. Functionally, catalyzes the NADPH-dependent reduction of 7-cyano-7-deazaguanine (preQ0) to 7-aminomethyl-7-deazaguanine (preQ1). This Prochlorococcus marinus (strain MIT 9215) protein is NADPH-dependent 7-cyano-7-deazaguanine reductase.